Here is a 303-residue protein sequence, read N- to C-terminus: Vacuolar protein sorting-associated protein 26B (303 aa).

This sequence belongs to the VPS26 family. As to quaternary structure, component of the retromer complex which consists of VPS29 (MAG1), VPS26 (VPS26A or VPS26B), VPS35 (VPS35A or VPS35B or VPS35C), VPS5/17 (SNX1 or SNX2A or SNX2B). Component of a retromer subcomplex consisting of VPS29 (MAG1), VPS26 (VPS26A or VPS26B), VPS35 (VPS35A or VPS35B or VPS35C).

The protein localises to the cytoplasm. Its subcellular location is the endosome membrane. It is found in the prevacuolar compartment membrane. The protein resides in the golgi apparatus. It localises to the trans-Golgi network membrane. Plays a role in vesicular protein sorting. Component of the membrane-associated retromer complex which is essential in endosome-to-Golgi retrograde transport. The VPS29-VPS26-VPS35 subcomplex may be involved in recycling of specific cargos from endosome to the plasma membrane. The sequence is that of Vacuolar protein sorting-associated protein 26B (VPS26B) from Arabidopsis thaliana (Mouse-ear cress).